Reading from the N-terminus, the 62-residue chain is Photosystem II reaction center protein Z (62 aa).

2 helical membrane passes run 8-28 (AIFA…VVFA) and 41-61 (FSGT…NSLI).

This sequence belongs to the PsbZ family. PSII is composed of 1 copy each of membrane proteins PsbA, PsbB, PsbC, PsbD, PsbE, PsbF, PsbH, PsbI, PsbJ, PsbK, PsbL, PsbM, PsbT, PsbY, PsbZ, Psb30/Ycf12, at least 3 peripheral proteins of the oxygen-evolving complex and a large number of cofactors. It forms dimeric complexes.

It localises to the plastid. It is found in the chloroplast thylakoid membrane. Its function is as follows. May control the interaction of photosystem II (PSII) cores with the light-harvesting antenna, regulates electron flow through the 2 photosystem reaction centers. PSII is a light-driven water plastoquinone oxidoreductase, using light energy to abstract electrons from H(2)O, generating a proton gradient subsequently used for ATP formation. This Acorus gramineus (Dwarf sweet flag) protein is Photosystem II reaction center protein Z.